A 361-amino-acid chain; its full sequence is UPF0283 membrane protein Smed_1530 (361 aa).

Residues 1-40 (MNDDSNGRRRRPAAFPVGTEDATSRELEQTPRRAPGSFSD) form a disordered region. Residues 22–31 (ATSRELEQTP) are compositionally biased toward basic and acidic residues. 2 helical membrane passes run 76-96 (FGKI…GLWV) and 109-129 (WLGY…LIVV).

This sequence belongs to the UPF0283 family.

It localises to the cell inner membrane. This is UPF0283 membrane protein Smed_1530 from Sinorhizobium medicae (strain WSM419) (Ensifer medicae).